The primary structure comprises 372 residues: MAASSHAIAPTDAELLQAQADLWRHSLYYLTSMALKCAVELHIPTAIHNLGGATTLPDLVTALSLPKTKLPFLGRIMRLLVTSGIFASDGANGDGAAAEAVYRLNPLSWLLVEGVESEDHTYQKYFVLATVSQHYVDAGLSLADWFRKDLPEPLPSPFECLHGVPLAHESTKLLDEELDRIVEEGVAAHDNLAIGTIIRECSDIFSGLHSLTYCCGRQGNISATAIIKAFPDIKCTVLNLPRVIETAPADDAVSSVTGDLFHTIPPAQAVMLKLVLHFWSDEDCVKILEQCRKAIPSREEGGKVIIIEILLGPYMGPIMYEAQLLMDMLMMVNTRGRQRTENDWRQIFTKAGFSDYKIVKKIGARGVIEVYP.

S-adenosyl-L-methionine contacts are provided by G216, D259, and K273. The active-site Proton acceptor is H277.

It belongs to the class I-like SAM-binding methyltransferase superfamily. Cation-independent O-methyltransferase family. COMT subfamily. Homodimer. Expressed predominantly in root hairs.

In terms of biological role, O-methyltransferase of unknown substrate specificity. Not active on resorcinol, orcinol, guaiacol, eugenol, ferulic acid, p-coumaric acid, catechol, caffeic acid or monomethyl ethers of resorcinol or orcinol. The polypeptide is Probable O-methyltransferase 2 (OMT2) (Sorghum bicolor (Sorghum)).